Here is a 307-residue protein sequence, read N- to C-terminus: Cytochrome c1 1, heme protein, mitochondrial (307 aa).

A mitochondrion-targeting transit peptide spans 1–64; it reads MVGGGVIQQI…LLSFSTVASA (64 aa). Residues 65–270 lie on the Mitochondrial intermembrane side of the membrane; it reads DEAEHGLESP…EPEMEERKLM (206 aa). Residues 90 to 246 enclose the Cytochrome c domain; it reads ASIRRGHQVY…YEDGVPATEA (157 aa). Residues C103, C106, H107, and M226 each contribute to the heme c site. The chain crosses the membrane as a helical span at residues 271-288; that stretch reads GFKWIFLLSLALLQAAYY. Topologically, residues 289 to 307 are mitochondrial matrix; that stretch reads RRLKWSVLKSRKLVLDVVN.

The protein belongs to the cytochrome c family. As to quaternary structure, component of the ubiquinol-cytochrome c oxidoreductase (cytochrome b-c1 complex, complex III, CIII), a multisubunit enzyme composed of 10 subunits. The complex is composed of 3 respiratory subunits cytochrome b (MT-CYB), cytochrome c1 (CYC1-1 or CYC1-2) and Rieske protein (UCR1-1 or UCR1-2), 2 core protein subunits MPPalpha1 (or MPPalpha2) and MPPB, and 5 low-molecular weight protein subunits QCR7-1 (or QCR7-2), UCRQ-1 (or UCRQ-2), QCR9, UCRY and probably QCR6-1 (or QCR6-2). The complex exists as an obligatory dimer and forms supercomplexes (SCs) in the inner mitochondrial membrane with NADH-ubiquinone oxidoreductase (complex I, CI), resulting in different assemblies (supercomplexes SCI(1)III(2) and SCI(2)III(4)). Post-translationally, binds 1 heme c group covalently per subunit.

The protein resides in the mitochondrion inner membrane. Functionally, component of the ubiquinol-cytochrome c oxidoreductase, a multisubunit transmembrane complex that is part of the mitochondrial electron transport chain which drives oxidative phosphorylation. The respiratory chain contains 3 multisubunit complexes succinate dehydrogenase (complex II, CII), ubiquinol-cytochrome c oxidoreductase (cytochrome b-c1 complex, complex III, CIII) and cytochrome c oxidase (complex IV, CIV), that cooperate to transfer electrons derived from NADH and succinate to molecular oxygen, creating an electrochemical gradient over the inner membrane that drives transmembrane transport and the ATP synthase. The cytochrome b-c1 complex catalyzes electron transfer from ubiquinol to cytochrome c, linking this redox reaction to translocation of protons across the mitochondrial inner membrane, with protons being carried across the membrane as hydrogens on the quinol. In the process called Q cycle, 2 protons are consumed from the matrix, 4 protons are released into the intermembrane space and 2 electrons are passed to cytochrome c. Cytochrome c1 is a catalytic core subunit containing a c-type heme. It transfers electrons from the [2Fe-2S] iron-sulfur cluster of the Rieske protein to cytochrome c. This chain is Cytochrome c1 1, heme protein, mitochondrial (CYC1-1), found in Arabidopsis thaliana (Mouse-ear cress).